The following is a 421-amino-acid chain: MKVLPAKKVEGVLSVPPDKSITHRALILSALAESESTLYNLLRCLDTERTHDILEKLGTRFEGDWEKMKVFPKPFAEPIEPLFCGNSGTTTRLMSGVLASYEMFTVLYGDSSLSRRPMRRVIEPLEMMGARFMARQNNYLPMAIKGNHLSGISYKTPVASAQVKSAVLLAGLRASGRTIVIEPAKSRDHTERMLKNLGVPVEVEGTRVVLEPATFRGFTMKVPGDISSAAFFVVLGAIHPNARITVTDVGLNPTRTGLLEVMKLMGANLEWEITEENLEPIGTVRVETSPNLKGVVVPEHLVPLMIDELPLVALLGVFAEGETVVRNAEELRKKESDRIRVLVENFKRLGVEIEEFKDGFKIVGKQSIKGGSVDPEGDHRMAMLFSIAGLVSEEGVDVKDHECVAVSFPNFYELLERVVIS.

3 residues coordinate 3-phosphoshikimate: Lys-19, Ser-20, and Arg-24. Lys-19 lines the phosphoenolpyruvate pocket. Phosphoenolpyruvate is bound by residues Gly-88 and Arg-116. The 3-phosphoshikimate site is built by Ser-160, Gln-162, Asp-307, and Lys-334. Phosphoenolpyruvate is bound at residue Gln-162. Asp-307 (proton acceptor) is an active-site residue. Phosphoenolpyruvate-binding residues include Arg-338 and Arg-380.

The protein belongs to the EPSP synthase family. In terms of assembly, monomer.

It is found in the cytoplasm. The enzyme catalyses 3-phosphoshikimate + phosphoenolpyruvate = 5-O-(1-carboxyvinyl)-3-phosphoshikimate + phosphate. Its pathway is metabolic intermediate biosynthesis; chorismate biosynthesis; chorismate from D-erythrose 4-phosphate and phosphoenolpyruvate: step 6/7. Catalyzes the transfer of the enolpyruvyl moiety of phosphoenolpyruvate (PEP) to the 5-hydroxyl of shikimate-3-phosphate (S3P) to produce enolpyruvyl shikimate-3-phosphate and inorganic phosphate. The chain is 3-phosphoshikimate 1-carboxyvinyltransferase from Thermotoga neapolitana (strain ATCC 49049 / DSM 4359 / NBRC 107923 / NS-E).